A 749-amino-acid polypeptide reads, in one-letter code: Probable serine/threonine-protein kinase drkC (749 aa).

The first 31 residues, 1-31, serve as a signal peptide directing secretion; that stretch reads MIIINKYIRMNKIAILFSFFILICCTGYSIS. Topologically, residues 32-423 are extracellular; that stretch reads YKINGINENK…TSPNYQKIIY (392 aa). Residues 124-153 are disordered; it reads DRTDQVSTSSSSSSFSEENKKSSSDDSAPA. The span at 130–139 shows a compositional bias: low complexity; sequence STSSSSSSFS. N-linked (GlcNAc...) asparagine glycans are attached at residues Asn157, Asn189, Asn283, Asn358, Asn373, Asn381, and Asn397. A helical transmembrane segment spans residues 424–444; it reads IVVGVGIAVLLIIAVGIYFII. At 445–749 the chain is on the cytoplasmic side; the sequence is RLRIKNKRLN…QEIVKRLEAM (305 aa). One can recognise a Protein kinase domain in the interval 491-749; the sequence is IVVQNRIGRG…QEIVKRLEAM (259 aa). ATP is bound by residues 497-505 and Lys518; that span reads IGRGSCAEV. The active-site Proton acceptor is Asp615.

It belongs to the protein kinase superfamily. TKL Ser/Thr protein kinase family.

The protein resides in the membrane. The catalysed reaction is L-seryl-[protein] + ATP = O-phospho-L-seryl-[protein] + ADP + H(+). It carries out the reaction L-threonyl-[protein] + ATP = O-phospho-L-threonyl-[protein] + ADP + H(+). The sequence is that of Probable serine/threonine-protein kinase drkC (drkC) from Dictyostelium discoideum (Social amoeba).